Reading from the N-terminus, the 410-residue chain is Mating-type locus allele B5 protein (410 aa).

The interval 1 to 110 is variable domain between B alleles; sequence MSSDPNFSLT…FNVVSPAVVC (110 aa). The homeobox; TALE-type DNA-binding region spans 107–184; the sequence is AVVCRNLSED…NARRRSGWSH (78 aa). The tract at residues 111–410 is highly conserved between B alleles; sequence RNLSEDLPAY…PFLCLSVAFV (300 aa). Disordered stretches follow at residues 201–241, 275–336, and 366–395; these read VRAK…TPAD, NKKT…PELS, and ILQS…PDEV. The span at 206–222 shows a compositional bias: low complexity; it reads SSSNQSTPPSPTSEYPS. A Nuclear localization signal motif is present at residues 276–308; it reads KKTPKPGMPRPVTTVTKRQPARKTKPAAKPKSR. Residues 294-307 show a composition bias toward basic residues; that stretch reads QPARKTKPAAKPKS. A compositionally biased stretch (polar residues) spans 312–336; it reads PRASTTPSIDSTLDSSKLESTPELS. The not essential for B5 function stretch occupies residues 333 to 410; sequence PELSMCSTAD…PFLCLSVAFV (78 aa). The segment covering 375–388 has biased composition (basic residues); the sequence is RGNRKVKALPKRAG.

The protein belongs to the TALE/M-ATYP homeobox family.

The protein resides in the nucleus. The B locus has at least 25 alleles, and any combination of two different B alleles yields a multimeric regulatory protein, that activates genes responsible for the pathogenicity and for the sexual development of the fungus within the corn plant. The protein is Mating-type locus allele B5 protein of Mycosarcoma maydis (Corn smut fungus).